The following is a 162-amino-acid chain: Globin CTT-VIIB-7 (162 aa).

The N-terminal stretch at 1–16 (MKFFAVLALCVVGAIA) is a signal peptide. Positions 18 to 162 (PLSADEANLV…TYAVALKSLE (145 aa)) constitute a Globin domain. The heme b site is built by His-76 and His-111.

It belongs to the globin family. As to quaternary structure, homodimer.

The chain is Globin CTT-VIIB-7 (CTT-7B7) from Chironomus thummi piger (Midge).